The sequence spans 593 residues: Copine-5 (593 aa).

The C2 1 domain occupies 2-134 (EQPEDMASLS…SSGSRLEKPL (133 aa)). Residue S19 is modified to Phosphoserine. Ca(2+) contacts are provided by D38, D44, D98, D100, S103, K108, and D110. S103 bears the Phosphoserine mark. Phosphoserine is present on S140. Residues 161–284 (KCGTIILSAE…ARGQSQFNIY (124 aa)) form the C2 2 domain. 5 residues coordinate Ca(2+): D192, D198, D254, D256, and D262. Residues 328-554 (NFTVAIDFTA…DVLAEIPDQL (227 aa)) enclose the VWFA domain. A disordered region spans residues 562–593 (GIRPRPPPAAPAQSPPQSPAHSPPGSPVHTHI). Positions 565–587 (PRPPPAAPAQSPPQSPAHSPPGS) are enriched in pro residues.

The protein belongs to the copine family. Ca(2+) serves as cofactor. As to expression, expressed in the cerebra and cerebellum of newborn brain. Expressed in the eye, lung and muscles but weakly expressed in the adult brain (at protein level).

It localises to the perikaryon. It is found in the cell projection. In terms of biological role, probable calcium-dependent phospholipid-binding protein that may play a role in calcium-mediated intracellular processes. Plays a role in dendrite formation by melanocytes. The sequence is that of Copine-5 from Mus musculus (Mouse).